The primary structure comprises 218 residues: Large ribosomal subunit protein uL3 (218 aa).

The interval 132–152 (FKGQGASHGTQAVHRRPGSIG) is disordered.

This sequence belongs to the universal ribosomal protein uL3 family. In terms of assembly, part of the 50S ribosomal subunit. Forms a cluster with proteins L14 and L19.

One of the primary rRNA binding proteins, it binds directly near the 3'-end of the 23S rRNA, where it nucleates assembly of the 50S subunit. This chain is Large ribosomal subunit protein uL3, found in Rhodococcus erythropolis (strain PR4 / NBRC 100887).